Reading from the N-terminus, the 239-residue chain is MATTWPPRTVIRKSSGLRTLESALYRSGLGPVAGVDEVGRGACAGPLVVAACVLGPGKLESLAALDDSKKLTESVRERLFPVIRRYALAYHVVFIPPAEVDRRGVHVANIEGMRRAVAGLSLRPGYVLSDGFRVPGLAVPSLPVIGGDAVAACIAAASVLAKVSRDRLMVAMDAEHPGYGFADHKGYSTPAHSAALARLGPCPQHRHSFINVRRVANGSGGRVVADCKPDLPLQRDEGR.

In terms of domain architecture, RNase H type-2 spans 30-221 (GPVAGVDEVG…VRRVANGSGG (192 aa)). Residues Asp-36, Glu-37, and Asp-130 each coordinate a divalent metal cation.

The protein belongs to the RNase HII family. Mn(2+) is required as a cofactor. Mg(2+) serves as cofactor.

It localises to the cytoplasm. It carries out the reaction Endonucleolytic cleavage to 5'-phosphomonoester.. Its function is as follows. Endonuclease that specifically degrades the RNA of RNA-DNA hybrids. The chain is Ribonuclease HII from Mycolicibacterium paratuberculosis (strain ATCC BAA-968 / K-10) (Mycobacterium paratuberculosis).